The sequence spans 382 residues: Dihydroflavonol 4-reductase (382 aa).

NADP(+) is bound by residues Lys44 and Tyr163.

Belongs to the NAD(P)-dependent epimerase/dehydratase family. Dihydroflavonol-4-reductase subfamily.

It catalyses the reaction a (2R,3S,4S)-leucoanthocyanidin + NADP(+) = a (2R,3R)-dihydroflavonol + NADPH + H(+). The enzyme catalyses (2S)-flavan-4-ol + NADP(+) = (2S)-flavanone + NADPH + H(+). The protein operates within pigment biosynthesis; anthocyanin biosynthesis. Its function is as follows. Bifunctional enzyme involved in flavonoid metabolism. This Arabidopsis thaliana (Mouse-ear cress) protein is Dihydroflavonol 4-reductase (DFRA).